We begin with the raw amino-acid sequence, 96 residues long: Co-chaperonin GroES (96 aa).

The protein belongs to the GroES chaperonin family. In terms of assembly, heptamer of 7 subunits arranged in a ring. Interacts with the chaperonin GroEL.

The protein localises to the cytoplasm. In terms of biological role, together with the chaperonin GroEL, plays an essential role in assisting protein folding. The GroEL-GroES system forms a nano-cage that allows encapsulation of the non-native substrate proteins and provides a physical environment optimized to promote and accelerate protein folding. GroES binds to the apical surface of the GroEL ring, thereby capping the opening of the GroEL channel. The chain is Co-chaperonin GroES from Dechloromonas aromatica (strain RCB).